The sequence spans 195 residues: Insertion element IS136 uncharacterized protein Atu4601 (195 aa).

The Integrase catalytic domain occupies 25–194; that stretch reads MVMRSNLRWC…SPRQFIRAKS (170 aa).

The sequence is that of Insertion element IS136 uncharacterized protein Atu4601 from Agrobacterium fabrum (strain C58 / ATCC 33970) (Agrobacterium tumefaciens (strain C58)).